The chain runs to 313 residues: Phenylalanine-4-hydroxylase (313 aa).

Fe cation contacts are provided by His-154, His-159, and Glu-200.

The protein belongs to the biopterin-dependent aromatic amino acid hydroxylase family. It depends on Fe(2+) as a cofactor.

It carries out the reaction (6R)-L-erythro-5,6,7,8-tetrahydrobiopterin + L-phenylalanine + O2 = (4aS,6R)-4a-hydroxy-L-erythro-5,6,7,8-tetrahydrobiopterin + L-tyrosine. Its pathway is amino-acid degradation; L-phenylalanine degradation; acetoacetate and fumarate from L-phenylalanine: step 1/6. The sequence is that of Phenylalanine-4-hydroxylase (phhA) from Ralstonia nicotianae (strain ATCC BAA-1114 / GMI1000) (Ralstonia solanacearum).